Here is a 554-residue protein sequence, read N- to C-terminus: Eukaryotic translation initiation factor 3 subunit D-2 (554 aa).

The RNA gate stretch occupies residues 291–305 (QFDLLTVNETALEPP). The tract at residues 530–554 (NAFDSDGNEDEETSEDRPFLKSMAN) is disordered.

The protein belongs to the eIF-3 subunit D family. As to quaternary structure, component of the eukaryotic translation initiation factor 3 (eIF-3) complex. The eIF-3 complex interacts with pix.

It localises to the cytoplasm. Its function is as follows. mRNA cap-binding component of the eukaryotic translation initiation factor 3 (eIF-3) complex, which is involved in protein synthesis of a specialized repertoire of mRNAs and, together with other initiation factors, stimulates binding of mRNA and methionyl-tRNAi to the 40S ribosome. The eIF-3 complex specifically targets and initiates translation of a subset of mRNAs involved in cell proliferation. In the eIF-3 complex, eif3d specifically recognizes and binds the 7-methylguanosine cap of a subset of mRNAs. The protein is Eukaryotic translation initiation factor 3 subunit D-2 of Drosophila mojavensis (Fruit fly).